The primary structure comprises 176 residues: Large ribosomal subunit protein uL6 (176 aa).

Belongs to the universal ribosomal protein uL6 family. As to quaternary structure, part of the 50S ribosomal subunit.

In terms of biological role, this protein binds to the 23S rRNA, and is important in its secondary structure. It is located near the subunit interface in the base of the L7/L12 stalk, and near the tRNA binding site of the peptidyltransferase center. This chain is Large ribosomal subunit protein uL6, found in Paraburkholderia xenovorans (strain LB400).